Here is a 363-residue protein sequence, read N- to C-terminus: Biotin synthase (363 aa).

Residues 40-268 (NVVQVSTLLS…ETQVRLSAGR (229 aa)) form the Radical SAM core domain. Residues cysteine 55, cysteine 59, and cysteine 62 each contribute to the [4Fe-4S] cluster site. The [2Fe-2S] cluster site is built by cysteine 99, cysteine 131, cysteine 191, and arginine 263.

The protein belongs to the radical SAM superfamily. Biotin synthase family. In terms of assembly, homodimer. [4Fe-4S] cluster is required as a cofactor. It depends on [2Fe-2S] cluster as a cofactor.

The enzyme catalyses (4R,5S)-dethiobiotin + (sulfur carrier)-SH + 2 reduced [2Fe-2S]-[ferredoxin] + 2 S-adenosyl-L-methionine = (sulfur carrier)-H + biotin + 2 5'-deoxyadenosine + 2 L-methionine + 2 oxidized [2Fe-2S]-[ferredoxin]. It participates in cofactor biosynthesis; biotin biosynthesis; biotin from 7,8-diaminononanoate: step 2/2. Catalyzes the conversion of dethiobiotin (DTB) to biotin by the insertion of a sulfur atom into dethiobiotin via a radical-based mechanism. This is Biotin synthase from Flavobacterium johnsoniae (strain ATCC 17061 / DSM 2064 / JCM 8514 / BCRC 14874 / CCUG 350202 / NBRC 14942 / NCIMB 11054 / UW101) (Cytophaga johnsonae).